We begin with the raw amino-acid sequence, 213 residues long: Outer envelope pore protein 24B, chloroplastic (213 aa).

The Cytoplasmic segment spans residues 1 to 3; it reads MAM. A beta stranded membrane pass occupies residues 4-13; it reads KASIKGKYDT. At 14 to 18 the chain is on the chloroplast intermembrane side; sequence DKTSG. A beta stranded membrane pass occupies residues 19-28; sequence IGSLAFNAGD. Over 29-32 the chain is Cytoplasmic; it reads IKLR. The chain crosses the membrane as a beta stranded span at residues 33–42; that stretch reads ATMTDATLVA. The Chloroplast intermembrane portion of the chain corresponds to 43-55; the sequence is GPTLTGLALAVEK. A beta stranded membrane pass occupies residues 56–64; it reads PGSFIVEYN. Over 65–70 the chain is Cytoplasmic; that stretch reads VPKKDV. A beta stranded membrane pass occupies residues 71 to 80; the sequence is RFQFMNTVRI. Over 81-93 the chain is Chloroplast intermembrane; sequence AEKPLNLTYIHSR. The chain crosses the membrane as a beta stranded span at residues 94-103; it reads ADNRTIVDGS. Topologically, residues 104–108 are cytoplasmic; the sequence is LVIDS. Residues 109-118 traverse the membrane as a beta stranded segment; sequence ANKLSANHMV. Residues 119 to 122 are Chloroplast intermembrane-facing; the sequence is GTNN. Residues 123–132 traverse the membrane as a beta stranded segment; the sequence is CKIKYTYAHG. The Cytoplasmic segment spans residues 133 to 144; it reads GLATFEPCYDLA. The beta stranded transmembrane segment at 145-156 threads the bilayer; sequence KNTWDFAVSRRF. Topologically, residues 157–159 are chloroplast intermembrane; sequence YSG. The beta stranded transmembrane segment at 160-168 threads the bilayer; the sequence is DNVRATYQT. Residues 169–170 lie on the Cytoplasmic side of the membrane; that stretch reads SS. The beta stranded transmembrane segment at 171–179 threads the bilayer; that stretch reads KLLGMEWSR. Over 180–201 the chain is Chloroplast intermembrane; it reads NNKASGFKVCASVNLADELKTP. The chain crosses the membrane as a beta stranded span at residues 202-211; it reads KLTAETTWNL. The Cytoplasmic segment spans residues 212–213; sequence EM.

Belongs to the plastid outer envelope porin OEP24 (TC 1.B.28) family. As to quaternary structure, homooligomers form large rather nonselective pores in plastidial outer membranes.

Its subcellular location is the plastid. It localises to the etioplast membrane. The protein localises to the chloroplast outer membrane. In terms of biological role, high-conductance voltage-dependent solute channel with a slight selectivity for cations transporting triosephosphates, dicarboxylic acids, ATP, inorganic phosphate (Pi), sugars, and positively or negatively charged amino acids. The sequence is that of Outer envelope pore protein 24B, chloroplastic (OEP24B) from Arabidopsis thaliana (Mouse-ear cress).